The following is a 133-amino-acid chain: Beta-synuclein (133 aa).

2 tandem repeats follow at residues 20 to 30 and 31 to 41. The interval 20-66 is 4 X 11 AA tandem repeats of [EGS]-K-T-K-[EQ]-[GQ]-V-X(4); it reads EKTKQGVTEAAEKTKEGVLYVGSKTSGVVQGVASVAEKTKEQASHLG. Residues 42-55 form a 3; approximate repeat; that stretch reads SKTSGVVQGVASVA. Ser45 is modified (phosphoserine). Repeat unit 4 spans residues 56-66; it reads EKTKEQASHLG. Residues 96–133 form a disordered region; that stretch reads EVAQEAAEEPLIEPLMEPEGESYEDSPQEEYQEYEPEA. Acidic residues predominate over residues 97-133; it reads VAQEAAEEPLIEPLMEPEGESYEDSPQEEYQEYEPEA. Ser117 bears the Phosphoserine; by BARK1, CK2 and GRK5 mark.

It belongs to the synuclein family. Phosphorylated. Phosphorylation by G-protein coupled receptor kinases (GRK) is more efficient than phosphorylation by CK1, CK2 and CaM-kinase II. Highly expressed in the brain.

It localises to the cytoplasm. Functionally, may be involved in neuronal plasticity. The protein is Beta-synuclein (Sncb) of Mus musculus (Mouse).